A 678-amino-acid polypeptide reads, in one-letter code: Glycine--tRNA ligase beta subunit (678 aa).

The protein belongs to the class-II aminoacyl-tRNA synthetase family. As to quaternary structure, tetramer of two alpha and two beta subunits.

Its subcellular location is the cytoplasm. It catalyses the reaction tRNA(Gly) + glycine + ATP = glycyl-tRNA(Gly) + AMP + diphosphate. The sequence is that of Glycine--tRNA ligase beta subunit from Streptococcus suis (strain 98HAH33).